The following is an 84-amino-acid chain: Large ribosomal subunit protein bL27 (84 aa).

A disordered region spans residues 1–23 (MAHKKGASSSRNGRESAAQRLGV).

Belongs to the bacterial ribosomal protein bL27 family.

The chain is Large ribosomal subunit protein bL27 from Salinispora arenicola (strain CNS-205).